The sequence spans 291 residues: B-lymphocyte antigen CD20 (291 aa).

Residues 1-44 are Cytoplasmic-facing; sequence MSGPFPAEPTKGPLAMQPAPKVNLKRTSSLVGPTQSFFMRESKA. Ser-29 carries the phosphoserine modification. Residues 45 to 65 traverse the membrane as a helical segment; sequence LGAVQIMNGLFHITLGGLLMI. Topologically, residues 66-68 are extracellular; it reads PTG. The helical transmembrane segment at 69-89 threads the bilayer; it reads VFAPICLSVWYPLWGGIMYII. Residues 90 to 111 are Cytoplasmic-facing; sequence SGSLLAAAAEKTSRKSLVKAKV. The chain crosses the membrane as a helical span at residues 112–132; it reads IMSSLSLFAAISGIILSIMDI. The Extracellular portion of the chain corresponds to 133–182; the sequence is LNMTLSHFLKMRRLELIQTSKPYVDIYDCEPSNSSEKNSPSTQYCNSIQS. The chain crosses the membrane as a helical span at residues 183–203; sequence VFLGILSAMLISAFFQKLVTA. The Cytoplasmic segment spans residues 204-291; that stretch reads GIVENEWKRM…SLPVENEIAP (88 aa). Cys-214 carries S-palmitoyl cysteine lipidation. Ser-219 is subject to Phosphoserine. A Phosphothreonine modification is found at Thr-233. The span at 261 to 270 shows a compositional bias: acidic residues; that stretch reads VQEEEEEEAE. A disordered region spans residues 261–291; the sequence is VQEEEEEEAEINFPAPPQEQESLPVENEIAP.

It belongs to the MS4A family. In terms of assembly, forms homotetramers. Interacts with the heavy and light chains of cell surface IgM, the antigen-binding components of the BCR. In terms of processing, phosphorylated.

Its subcellular location is the cell membrane. B-lymphocyte-specific membrane protein that plays a role in the regulation of cellular calcium influx necessary for the development, differentiation, and activation of B-lymphocytes. Functions as a store-operated calcium (SOC) channel component promoting calcium influx after activation by the B-cell receptor/BCR. The sequence is that of B-lymphocyte antigen CD20 (Ms4a1) from Mus musculus (Mouse).